The following is a 175-amino-acid chain: Thioredoxin M3, chloroplastic (175 aa).

A chloroplast-targeting transit peptide spans 1-59 (MAATATACPAPPPPRSLYRGVALAAPGRRRAGYGASSSAARRWPGCRRRWAAHRIRTVS). The 111-residue stretch at 61 to 171 (AYSPRGAKTI…YVRAIEKSIS (111 aa)) folds into the Thioredoxin domain. Catalysis depends on nucleophile residues cysteine 95 and cysteine 98. Cysteines 95 and 98 form a disulfide.

The protein belongs to the thioredoxin family. Plant M-type subfamily.

Its subcellular location is the plastid. The protein localises to the chloroplast. In terms of biological role, probable thiol-disulfide oxidoreductase that may be involved in the redox regulation of chloroplastic enzymes. The protein is Thioredoxin M3, chloroplastic of Oryza sativa subsp. japonica (Rice).